Reading from the N-terminus, the 419-residue chain is Acetyl transferase GW6a (419 aa).

In terms of domain architecture, N-acetyltransferase spans 12–210 (VRVREFDVEK…GHPVHAHRLP (199 aa)). Residues 44-68 (VHDHADDGDGAAAKEKKKTKTKTKK) are disordered. A compositionally biased stretch (basic residues) spans 58-68 (EKKKTKTKTKK).

The protein belongs to the acetyltransferase family. As to quaternary structure, interacts (via C-terminus) with HDR3 (via N-terminus). In terms of processing, ubiquitinated at Lys-63 by HDR3. Polyubiquitination of GW6A delays its degradation by the 26S proteasome and enhances GW6A histone acetyltransferase activity. Expressed in roots, leaf blades, leaf sheaths, shoot apical meristem and young panicles.

It is found in the nucleus. Its function is as follows. Possesses intrinsic histone acetyltransferase activity and acts as a positive regulator of grain weight, hull size, yield, and plant biomass. Regulates postitively grain weight and yield by enlarging spikelet hulls via increasing cell number and accelerating grain filling. In vitro, catalyzes the acetylation of histone H4 at Lys-6 (H4K5ac), Lys-13 (H4K12ac) and Lys-17 (H4K16ac). Involved in the regulation of plastochron (the time interval between leaf initiation event). The polypeptide is Acetyl transferase GW6a (Oryza sativa subsp. japonica (Rice)).